We begin with the raw amino-acid sequence, 136 residues long: Ribonuclease VapC47 (136 aa).

The PINc domain occupies 2 to 104 (IYMDTSALTK…AIHLAAAAQI (103 aa)). Residues Asp-5 and Asp-94 each contribute to the Mg(2+) site.

The protein belongs to the PINc/VapC protein family. Mg(2+) serves as cofactor.

Its function is as follows. Toxic component of a type II toxin-antitoxin (TA) system. An RNase. Its toxic effect on colony formation is neutralized by coexpression with cognate antitoxin VapB47. This is Ribonuclease VapC47 from Mycobacterium tuberculosis (strain CDC 1551 / Oshkosh).